A 204-amino-acid chain; its full sequence is Ancillary SecYEG translocon subunit (204 aa).

Topologically, residues 1–23 (MAYSIEEEQEINQLKDWWKENGK) are cytoplasmic. A helical membrane pass occupies residues 24–42 (TIIVAFILGVGGMFGWRYW). Residues 43 to 204 (QTHQAEQIAQ…QMAKMKLNNL (162 aa)) are Periplasmic-facing.

The protein belongs to the YfgM family. As to quaternary structure, interacts with the SecYEG translocon. Forms a complex with PpiD.

The protein resides in the cell inner membrane. May mediate protein transfer from the SecYEG translocon to the periplasmic chaperone network via its periplasmic C-terminal region. This is Ancillary SecYEG translocon subunit from Haemophilus influenzae (strain ATCC 51907 / DSM 11121 / KW20 / Rd).